Here is a 568-residue protein sequence, read N- to C-terminus: Urease subunit alpha (568 aa).

One can recognise a Urease domain in the interval 130–568 (GGIDTHIHFI…LPMAQRYFLF (439 aa)). Positions 135, 137, and 218 each coordinate Ni(2+). Lys218 is subject to N6-carboxylysine. His220 is a binding site for substrate. Ni(2+)-binding residues include His247 and His273. The Proton donor role is filled by His321. Asp361 lines the Ni(2+) pocket.

Belongs to the metallo-dependent hydrolases superfamily. Urease alpha subunit family. As to quaternary structure, heterotrimer of UreA (gamma), UreB (beta) and UreC (alpha) subunits. Three heterotrimers associate to form the active enzyme. Ni cation is required as a cofactor. Post-translationally, carboxylation allows a single lysine to coordinate two nickel ions.

The protein localises to the cytoplasm. It catalyses the reaction urea + 2 H2O + H(+) = hydrogencarbonate + 2 NH4(+). Its pathway is nitrogen metabolism; urea degradation; CO(2) and NH(3) from urea (urease route): step 1/1. The chain is Urease subunit alpha from Burkholderia pseudomallei (strain 1106a).